A 461-amino-acid chain; its full sequence is tRNA modification GTPase MnmE (461 aa).

3 residues coordinate (6S)-5-formyl-5,6,7,8-tetrahydrofolate: Lys-32, Glu-89, and Lys-128. Positions 224-387 constitute a TrmE-type G domain; the sequence is GHALSIVGKP…LSQKISEFFP (164 aa). Asn-234 provides a ligand contact to K(+). GTP contacts are provided by residues 234 to 239, 253 to 259, and 278 to 281; these read NAGKSS, SDIKGTT, and DTAG. Mg(2+) is bound at residue Ser-238. 3 residues coordinate K(+): Ser-253, Ile-255, and Thr-258. Thr-259 is a Mg(2+) binding site. Lys-461 contacts (6S)-5-formyl-5,6,7,8-tetrahydrofolate.

Belongs to the TRAFAC class TrmE-Era-EngA-EngB-Septin-like GTPase superfamily. TrmE GTPase family. In terms of assembly, homodimer. Heterotetramer of two MnmE and two MnmG subunits. The cofactor is K(+).

The protein localises to the cytoplasm. Functionally, exhibits a very high intrinsic GTPase hydrolysis rate. Involved in the addition of a carboxymethylaminomethyl (cmnm) group at the wobble position (U34) of certain tRNAs, forming tRNA-cmnm(5)s(2)U34. This Helicobacter pylori (strain J99 / ATCC 700824) (Campylobacter pylori J99) protein is tRNA modification GTPase MnmE.